We begin with the raw amino-acid sequence, 508 residues long: MRGILVANSTQLPIRPRPDLKVSRNANGADVVIAGLVEGSQGPTVQGLAPRAVKEAEETFGAPLVEVAIRAGGSTKIGSTVVLPWFGNSLVLVGCGAEGFDGESLRKAAGSGARAAADLSHGSSLKVAVDMGTVSAEQVRIAAEGALLGCYKVPTITATSNEPEISTVTIVSNARGAKPELNKARILADAVYTARDWVDAPANLLYPKTFAASVQSWCNNLSDVTVDVLDEKALGRGGFGGILAVGGGSAHSPRLVRVEYAPEGSTTTLALVGKGITFDSGGLNIKTAANMYTMKCDMGGAAAVLAAIGAIARLGLNVRVVAYGCLAENMPSGSGWRPSDVVTMYDGTTVENGNSDAEGRIVMADGLARACEDNPDFIVDISTLTGACMVALGNHTAGVMTSGAQAADTLLDASEAAGEDFWELPITDEVREGLHSDIADVKSSGAREGGAMLAAAFLQRFVTPGIDWAHLDIAGPAYNEASAHDYTPIQGTGFGVRTLVQLAAHMAG.

Residues Lys274 and Asp279 each contribute to the Mn(2+) site. Lys286 is a catalytic residue. Residues Asp297, Asp356, and Glu358 each contribute to the Mn(2+) site. Arg360 is a catalytic residue.

Belongs to the peptidase M17 family. It depends on Mn(2+) as a cofactor.

It is found in the cytoplasm. The catalysed reaction is Release of an N-terminal amino acid, Xaa-|-Yaa-, in which Xaa is preferably Leu, but may be other amino acids including Pro although not Arg or Lys, and Yaa may be Pro. Amino acid amides and methyl esters are also readily hydrolyzed, but rates on arylamides are exceedingly low.. The enzyme catalyses Release of an N-terminal amino acid, preferentially leucine, but not glutamic or aspartic acids.. Functionally, presumably involved in the processing and regular turnover of intracellular proteins. Catalyzes the removal of unsubstituted N-terminal amino acids from various peptides. This Cutibacterium acnes (strain DSM 16379 / KPA171202) (Propionibacterium acnes) protein is Probable cytosol aminopeptidase.